The following is a 199-amino-acid chain: ATP-dependent Clp protease proteolytic subunit (199 aa).

Residue serine 97 is the Nucleophile of the active site. Histidine 122 is an active-site residue.

This sequence belongs to the peptidase S14 family. Fourteen ClpP subunits assemble into 2 heptameric rings which stack back to back to give a disk-like structure with a central cavity, resembling the structure of eukaryotic proteasomes.

It is found in the cytoplasm. It carries out the reaction Hydrolysis of proteins to small peptides in the presence of ATP and magnesium. alpha-casein is the usual test substrate. In the absence of ATP, only oligopeptides shorter than five residues are hydrolyzed (such as succinyl-Leu-Tyr-|-NHMec, and Leu-Tyr-Leu-|-Tyr-Trp, in which cleavage of the -Tyr-|-Leu- and -Tyr-|-Trp bonds also occurs).. Functionally, cleaves peptides in various proteins in a process that requires ATP hydrolysis. Has a chymotrypsin-like activity. Plays a major role in the degradation of misfolded proteins. The sequence is that of ATP-dependent Clp protease proteolytic subunit from Geotalea daltonii (strain DSM 22248 / JCM 15807 / FRC-32) (Geobacter daltonii).